Consider the following 476-residue polypeptide: Protein PAL OF QUIRKY (476 aa).

The N-terminal stretch at 1–14 (MTTVSSAFATVAEG) is a signal peptide. Residues 204-256 (TRRTNSGTSGSGDGNGGICGQESMMLETNSSFGSTSSSVSSSNLPPIKSSGED) are disordered. Positions 212–222 (SGSGDGNGGIC) are enriched in gly residues. Low complexity predominate over residues 233 to 252 (SSFGSTSSSVSSSNLPPIKS).

As to quaternary structure, homodimer. Interacts with QKY and SUB/SCM at the plasma membrane. In terms of tissue distribution, observed in seedlings, roots, shoots, leaves, stems, inflorescence and flowers.

The protein localises to the cell membrane. Its subcellular location is the endomembrane system. Collaboratively with SUB and QKY, regulates cell growth anisotropy during gynoecium development, thus linking together cell-cell communication and cellular growth. This chain is Protein PAL OF QUIRKY, found in Arabidopsis thaliana (Mouse-ear cress).